Here is a 404-residue protein sequence, read N- to C-terminus: Multidrug resistance protein MdtG (404 aa).

The next 11 helical transmembrane spans lie at 19 to 39, 56 to 76, 90 to 110, 113 to 133, 144 to 164, 171 to 191, 222 to 242, 254 to 274, 288 to 308, 317 to 337, and 376 to 396; these read LGCF…PLYV, LVFS…GGLA, LGMA…QFLI, ALLG…ATQV, TLST…GLLA, PVFF…FFFI, LFVT…ILTL, IAFI…LSAP, ILIV…FVQT, FLLG…LVYN, and AVFC…WNSL.

Belongs to the major facilitator superfamily. DHA1 family. MdtG (TC 2.A.1.2.20) subfamily.

It is found in the cell inner membrane. The polypeptide is Multidrug resistance protein MdtG (Salmonella typhi).